A 73-amino-acid polypeptide reads, in one-letter code: Disintegrin barbourin (73 aa).

Positions 1-73 constitute a Disintegrin domain; sequence EAGEECDCGS…ADCPRNGLYG (73 aa). 6 disulfides stabilise this stretch: Cys-6–Cys-21, Cys-8–Cys-16, Cys-15–Cys-38, Cys-29–Cys-35, Cys-34–Cys-59, and Cys-47–Cys-66. Positions 51–53 match the Cell attachment site; atypical (KGD) motif; it reads KGD.

Belongs to the venom metalloproteinase (M12B) family. P-II subfamily. P-IIa sub-subfamily. As to quaternary structure, monomer. In terms of tissue distribution, expressed by the venom gland.

The protein localises to the secreted. Its function is as follows. Inhibitor of ligand binding to the integrins alpha-IIb/beta-3 (ITGA2B/ITGB3). Competition with fibrinogen for the RGD recognition sites on the alpha-IIb/beta-3 integrin results in the inhibition of platelet aggregation induced by ADP, thrombin, platelet-activating factor and collagen. This chain is Disintegrin barbourin, found in Sistrurus miliarius barbouri (Dusky pigmy rattlesnake).